Here is a 124-residue protein sequence, read N- to C-terminus: Ribonuclease pancreatic (124 aa).

Positions 1-23 (RESPAMKFQRQHMDSGNSPGNNP) are disordered. The substrate site is built by Lys-7 and Arg-10. The Proton acceptor role is filled by His-12. Over residues 14-23 (DSGNSPGNNP) the composition is skewed to polar residues. Intrachain disulfides connect Cys-26/Cys-84, Cys-40/Cys-95, Cys-58/Cys-110, and Cys-65/Cys-72. Residues 41-45 (KPVNT) and Lys-66 contribute to the substrate site. Asn-76 carries N-linked (GlcNAc...) asparagine; partial glycosylation. Substrate is bound at residue Arg-85. Residue His-119 is the Proton donor of the active site.

This sequence belongs to the pancreatic ribonuclease family. In terms of assembly, monomer. Interacts with and forms tight 1:1 complexes with RNH1. Dimerization of two such complexes may occur. Interaction with RNH1 inhibits this protein. Pancreas.

Its subcellular location is the secreted. It catalyses the reaction an [RNA] containing cytidine + H2O = an [RNA]-3'-cytidine-3'-phosphate + a 5'-hydroxy-ribonucleotide-3'-[RNA].. It carries out the reaction an [RNA] containing uridine + H2O = an [RNA]-3'-uridine-3'-phosphate + a 5'-hydroxy-ribonucleotide-3'-[RNA].. Endonuclease that catalyzes the cleavage of RNA on the 3' side of pyrimidine nucleotides. Acts on single-stranded and double-stranded RNA. In Balaenoptera acutorostrata (Common minke whale), this protein is Ribonuclease pancreatic (RNASE1).